Reading from the N-terminus, the 335-residue chain is Large ribosomal subunit protein uL10 (335 aa).

Residues 304–335 (GAAAPVEEAPVEEKKEEKKEEAAAPAGLGMLF) form a disordered region. Positions 314–325 (VEEKKEEKKEEA) are enriched in basic and acidic residues.

This sequence belongs to the universal ribosomal protein uL10 family. Part of the 50S ribosomal subunit. Homodimer, it forms part of the ribosomal stalk which helps the ribosome interact with GTP-bound translation factors. Forms both a pentameric L10(L12)2(L12)2 and heptameric L10(L12)2(L12)2(L12)2 complex, where L10 forms an elongated spine to which the L12 dimers bind in a sequential fashion. The proportion of heptameric complexes increases during cell growth.

Functionally, forms part of the ribosomal stalk, playing a central role in the interaction of the ribosome with GTP-bound translation factors. In Methanococcus maripaludis (strain DSM 14266 / JCM 13030 / NBRC 101832 / S2 / LL), this protein is Large ribosomal subunit protein uL10.